Here is a 107-residue protein sequence, read N- to C-terminus: Nucleoid-associated protein MCA1327 (107 aa).

Belongs to the YbaB/EbfC family. Homodimer.

The protein resides in the cytoplasm. Its subcellular location is the nucleoid. Binds to DNA and alters its conformation. May be involved in regulation of gene expression, nucleoid organization and DNA protection. This chain is Nucleoid-associated protein MCA1327, found in Methylococcus capsulatus (strain ATCC 33009 / NCIMB 11132 / Bath).